The following is a 282-amino-acid chain: Pantothenate synthetase (282 aa).

30–37 (MGALHAGH) lines the ATP pocket. Residue His37 is the Proton donor of the active site. Gln61 serves as a coordination point for (R)-pantoate. Residue Gln61 coordinates beta-alanine. Residue 147 to 150 (GEKD) participates in ATP binding. (R)-pantoate is bound at residue Gln153. Residues Val176 and 184–187 (LSSR) contribute to the ATP site.

This sequence belongs to the pantothenate synthetase family. As to quaternary structure, homodimer.

Its subcellular location is the cytoplasm. It carries out the reaction (R)-pantoate + beta-alanine + ATP = (R)-pantothenate + AMP + diphosphate + H(+). Its pathway is cofactor biosynthesis; (R)-pantothenate biosynthesis; (R)-pantothenate from (R)-pantoate and beta-alanine: step 1/1. Functionally, catalyzes the condensation of pantoate with beta-alanine in an ATP-dependent reaction via a pantoyl-adenylate intermediate. This chain is Pantothenate synthetase, found in Bacteroides fragilis (strain ATCC 25285 / DSM 2151 / CCUG 4856 / JCM 11019 / LMG 10263 / NCTC 9343 / Onslow / VPI 2553 / EN-2).